The primary structure comprises 516 residues: Putative F-box and FNIP repeat-containing protein L414 (516 aa).

Residues 4 to 49 (INDLNMDVILHLLTFLTDKNKLNFMMTCTHLYQFISCVKYNNFQLF) form the F-box domain. 5 FNIP repeats span residues 123-165 (FNHT…FGEN), 166-208 (FNKM…LMYS), 341-383 (YNPK…NFNG), 385-428 (YDNI…FGKL), and 429-470 (YNKP…FGYM).

This chain is Putative F-box and FNIP repeat-containing protein L414, found in Acanthamoeba polyphaga (Amoeba).